The chain runs to 396 residues: Cytochrome b (396 aa).

The next 4 membrane-spanning stretches (helical) occupy residues Phe-32–Met-52, Trp-76–Gly-98, Leu-113–Val-133, and Phe-179–Leu-199. 2 residues coordinate heme b: His-82 and His-96. Residues His-183 and His-197 each contribute to the heme b site. An a ubiquinone-binding site is contributed by His-202. 4 consecutive transmembrane segments (helical) span residues Phe-225–Phe-245, Leu-289–His-309, Leu-321–Ala-341, and Tyr-348–Ile-368.

Belongs to the cytochrome b family. In terms of assembly, fungal cytochrome b-c1 complex contains 10 subunits; 3 respiratory subunits, 2 core proteins and 5 low-molecular weight proteins. Cytochrome b-c1 complex is a homodimer. Heme b serves as cofactor.

It is found in the mitochondrion inner membrane. Its function is as follows. Component of the ubiquinol-cytochrome c reductase complex (complex III or cytochrome b-c1 complex) that is part of the mitochondrial respiratory chain. The b-c1 complex mediates electron transfer from ubiquinol to cytochrome c. Contributes to the generation of a proton gradient across the mitochondrial membrane that is then used for ATP synthesis. The protein is Cytochrome b (cob) of Spizellomyces punctatus.